We begin with the raw amino-acid sequence, 284 residues long: 2-dehydro-3-deoxyphosphooctonate aldolase (284 aa).

This sequence belongs to the KdsA family.

The protein resides in the cytoplasm. The catalysed reaction is D-arabinose 5-phosphate + phosphoenolpyruvate + H2O = 3-deoxy-alpha-D-manno-2-octulosonate-8-phosphate + phosphate. It functions in the pathway carbohydrate biosynthesis; 3-deoxy-D-manno-octulosonate biosynthesis; 3-deoxy-D-manno-octulosonate from D-ribulose 5-phosphate: step 2/3. It participates in bacterial outer membrane biogenesis; lipopolysaccharide biosynthesis. This is 2-dehydro-3-deoxyphosphooctonate aldolase from Vibrio vulnificus (strain CMCP6).